The primary structure comprises 471 residues: Glutamate--tRNA ligase (471 aa).

Positions 9–19 (PSPTGFLHVGG) match the 'HIGH' region motif. Residues C98, C100, C125, and D127 each coordinate Zn(2+). A 'KMSKS' region motif is present at residues 237–241 (KLSKR). K240 contacts ATP.

It belongs to the class-I aminoacyl-tRNA synthetase family. Glutamate--tRNA ligase type 1 subfamily. Monomer. The cofactor is Zn(2+).

The protein localises to the cytoplasm. It catalyses the reaction tRNA(Glu) + L-glutamate + ATP = L-glutamyl-tRNA(Glu) + AMP + diphosphate. In terms of biological role, catalyzes the attachment of glutamate to tRNA(Glu) in a two-step reaction: glutamate is first activated by ATP to form Glu-AMP and then transferred to the acceptor end of tRNA(Glu). This is Glutamate--tRNA ligase from Aeromonas salmonicida (strain A449).